Reading from the N-terminus, the 459-residue chain is DIMBOA UDP-glucosyltransferase BX8 (459 aa).

H19 acts as the Proton acceptor in catalysis. An anthocyanidin is bound at residue H19. D119 acts as the Charge relay in catalysis. T141, A340, Q342, H357, W360, N361, S362, and E365 together coordinate UDP-alpha-D-glucose. G380 contributes to the an anthocyanidin binding site. UDP-alpha-D-glucose is bound by residues D381 and Q382.

Belongs to the UDP-glycosyltransferase family. It depends on Mg(2+) as a cofactor. Requires Ca(2+) as cofactor. As to expression, expressed at the same levels in roots and shoots.

The catalysed reaction is DIMBOA + UDP-alpha-D-glucose = DIMBOA beta-D-glucoside + UDP + H(+). It carries out the reaction DIBOA + UDP-alpha-D-glucose = DIBOA beta-D-glucoside + UDP + H(+). In terms of biological role, glucosyltransferase involved in the last step of benzoxazinoid glucoside biosynthesis. Catalyzes the glucosylation of hydroxamic acids utilizing UDP-glucose as glucose doner, reducing the toxicity of these natural insecticides for storage. Can use DIMBOA and DIBOA as substrates, HMBOA (2-hydroxy-7-methoxy-2H-1,4-benzoxazin-3(4H)-one) and HBOA (2-hydroxy-2H-1,4-benzoxazin-3(4H)-one) with a lower efficiency, but not indole acetic acid or quercitin. This is DIMBOA UDP-glucosyltransferase BX8 (Bx8) from Zea mays (Maize).